The sequence spans 175 residues: Chorismate pyruvate-lyase (175 aa).

4 residues coordinate substrate: Met36, Arg78, Leu116, and Glu157.

The protein belongs to the UbiC family. Monomer.

It is found in the cytoplasm. It catalyses the reaction chorismate = 4-hydroxybenzoate + pyruvate. The protein operates within cofactor biosynthesis; ubiquinone biosynthesis. In terms of biological role, removes the pyruvyl group from chorismate, with concomitant aromatization of the ring, to provide 4-hydroxybenzoate (4HB) for the ubiquinone pathway. This Hamiltonella defensa subsp. Acyrthosiphon pisum (strain 5AT) protein is Chorismate pyruvate-lyase.